Here is a 105-residue protein sequence, read N- to C-terminus: Nucleoid-associated protein SSP2277 (105 aa).

A disordered region spans residues 1–41 (MRGGGNMQQMMKQMQKMQKKMGEEQEKLKEEKVQGTAGGGM). Over residues 7–16 (MQQMMKQMQK) the composition is skewed to low complexity. The span at 20 to 33 (KMGEEQEKLKEEKV) shows a compositional bias: basic and acidic residues.

This sequence belongs to the YbaB/EbfC family. Homodimer.

The protein localises to the cytoplasm. It is found in the nucleoid. In terms of biological role, binds to DNA and alters its conformation. May be involved in regulation of gene expression, nucleoid organization and DNA protection. This Staphylococcus saprophyticus subsp. saprophyticus (strain ATCC 15305 / DSM 20229 / NCIMB 8711 / NCTC 7292 / S-41) protein is Nucleoid-associated protein SSP2277.